Consider the following 1070-residue polypeptide: DNA-directed RNA polymerase subunit beta (1070 aa).

It belongs to the RNA polymerase beta chain family. As to quaternary structure, in plastids the minimal PEP RNA polymerase catalytic core is composed of four subunits: alpha, beta, beta', and beta''. When a (nuclear-encoded) sigma factor is associated with the core the holoenzyme is formed, which can initiate transcription.

Its subcellular location is the plastid. It localises to the chloroplast. The enzyme catalyses RNA(n) + a ribonucleoside 5'-triphosphate = RNA(n+1) + diphosphate. Its function is as follows. DNA-dependent RNA polymerase catalyzes the transcription of DNA into RNA using the four ribonucleoside triphosphates as substrates. This is DNA-directed RNA polymerase subunit beta from Populus alba (White poplar).